We begin with the raw amino-acid sequence, 415 residues long: Gamma-glutamyl phosphate reductase (415 aa).

The protein belongs to the gamma-glutamyl phosphate reductase family.

The protein localises to the cytoplasm. It carries out the reaction L-glutamate 5-semialdehyde + phosphate + NADP(+) = L-glutamyl 5-phosphate + NADPH + H(+). It functions in the pathway amino-acid biosynthesis; L-proline biosynthesis; L-glutamate 5-semialdehyde from L-glutamate: step 2/2. In terms of biological role, catalyzes the NADPH-dependent reduction of L-glutamate 5-phosphate into L-glutamate 5-semialdehyde and phosphate. The product spontaneously undergoes cyclization to form 1-pyrroline-5-carboxylate. The sequence is that of Gamma-glutamyl phosphate reductase from Pseudoalteromonas translucida (strain TAC 125).